The chain runs to 226 residues: Uracil-DNA glycosylase (226 aa).

Aspartate 65 serves as the catalytic Proton acceptor.

It belongs to the uracil-DNA glycosylase (UDG) superfamily. UNG family.

Its subcellular location is the cytoplasm. The catalysed reaction is Hydrolyzes single-stranded DNA or mismatched double-stranded DNA and polynucleotides, releasing free uracil.. Its function is as follows. Excises uracil residues from the DNA which can arise as a result of misincorporation of dUMP residues by DNA polymerase or due to deamination of cytosine. This Bacillus pumilus (strain SAFR-032) protein is Uracil-DNA glycosylase.